We begin with the raw amino-acid sequence, 680 residues long: Oligopeptidase A (680 aa).

His-469 provides a ligand contact to Zn(2+). Residue Glu-470 is part of the active site. Zn(2+) contacts are provided by His-473 and His-476.

It belongs to the peptidase M3 family. It depends on Zn(2+) as a cofactor.

It catalyses the reaction Hydrolysis of oligopeptides, with broad specificity. Gly or Ala commonly occur as P1 or P1' residues, but more distant residues are also important, as is shown by the fact that Z-Gly-Pro-Gly-|-Gly-Pro-Ala is cleaved, but not Z-(Gly)(5).. May play a specific role in the degradation of signal peptides after they are released from precursor forms of secreted proteins. Can cleave N-acetyl-L-Ala(4). This Salmonella typhimurium (strain LT2 / SGSC1412 / ATCC 700720) protein is Oligopeptidase A (prlC).